Here is a 351-residue protein sequence, read N- to C-terminus: SH3 domain-containing protein 3 (351 aa).

2 coiled-coil regions span residues 1 to 21 (MDAFRRQASKLRDQVAKQQLA) and 193 to 213 (LQLAEAKMQELKANMAVLGKE). One can recognise a BAR domain in the interval 31-267 (YESSDVMVID…MVTEKQHKES (237 aa)). An SH3 domain is found at 281–340 (TSYFLAEVIHPFSAASEKELDLDKGDYIVVRKVSQTGWAEGECKGKAGWFPMAYIEKRQR).

In terms of assembly, interacts with FREE1. Interacts (via SH3 domain) with DRP2A/ADL6. Binds to SH3P2. Detected in all tissues except seedlings.

Its subcellular location is the cytoplasmic vesicle. It is found in the clathrin-coated vesicle. In terms of biological role, may be involved in the recruitment of DRP2A to the accessory protein complex and in the negative regulation of its GTPase activity. The protein is SH3 domain-containing protein 3 of Arabidopsis thaliana (Mouse-ear cress).